The primary structure comprises 2351 residues: Protein FAM186A (2351 aa).

A coiled-coil region spans residues 296 to 340 (EAEKELSLKIIRDLSNENEMLQQKLQDAEEKCEQLIRSKIVIEQL). Disordered stretches follow at residues 412 to 460 (ERTP…SWKR), 470 to 489 (ETSG…SEAK), 505 to 538 (EMKS…GKSG), 593 to 667 (QFDD…SEQS), 809 to 838 (STVQ…SGMS), 868 to 976 (LQMK…RGLE), 1805 to 1837 (GGQS…PGQP), and 1888 to 1907 (FQPP…STPG). The segment covering 433–446 (DSTKDNVSLKKGDF) has biased composition (basic and acidic residues). The segment covering 472 to 484 (SGPNLSDNKSGQK) has biased composition (polar residues). The span at 506-520 (MKSFSEDKSKSPTEA) shows a compositional bias: basic and acidic residues. Over residues 527–538 (LTETKSQGGKSG) the composition is skewed to polar residues. Residues 603–612 (GKIKGKKHHI) are compositionally biased toward basic residues. Basic and acidic residues-rich tracts occupy residues 619-632 (SKEE…ELTK) and 812-823 (QKDHKEKEKQRQ). Residues 812-860 (QKDHKEKEKQRQEQYLQEGQEQMSGMSLKQQLLGERNLLKEHYEKISEN) adopt a coiled-coil conformation. Polar residues predominate over residues 824 to 838 (EQYLQEGQEQMSGMS). Basic and acidic residues-rich tracts occupy residues 901 to 912 (AEQEEKQKQRGQ), 939 to 955 (LEKE…EAKH), and 964 to 976 (KGKE…RGLE). Positions 1816-1835 (PQAPPSPGQLPISRAPPTPG) are enriched in pro residues. Over residues 1894–1907 (AEQSPYLQAPSTPG) the composition is skewed to polar residues.

Belongs to the FAM186 family.

The chain is Protein FAM186A (FAM186A) from Homo sapiens (Human).